A 546-amino-acid polypeptide reads, in one-letter code: Chaperonin GroEL 2 (546 aa).

Residues 30–33 (TLGP), Lys51, 87–91 (DGTTT), Gly415, 479–481 (NAA), and Asp495 each bind ATP. A disordered region spans residues 526–546 (KEDAPMPGGMPGGMGGMGMDM). Residues 534 to 546 (GMPGGMGGMGMDM) show a composition bias toward gly residues.

Belongs to the chaperonin (HSP60) family. Forms a cylinder of 14 subunits composed of two heptameric rings stacked back-to-back. Interacts with the co-chaperonin GroES.

It localises to the cytoplasm. It carries out the reaction ATP + H2O + a folded polypeptide = ADP + phosphate + an unfolded polypeptide.. In terms of biological role, together with its co-chaperonin GroES, plays an essential role in assisting protein folding. The GroEL-GroES system forms a nano-cage that allows encapsulation of the non-native substrate proteins and provides a physical environment optimized to promote and accelerate protein folding. The chain is Chaperonin GroEL 2 from Burkholderia lata (strain ATCC 17760 / DSM 23089 / LMG 22485 / NCIMB 9086 / R18194 / 383).